The following is a 1380-amino-acid chain: Mitogen-activated protein kinase kinase kinase 5 (1380 aa).

Residues 30–97 are disordered; it reads CRRGGGAATA…GNSGSGGGRR (68 aa). The span at 37–49 shows a compositional bias: low complexity; it reads ATAAEGEPSLQPL. The segment covering 50 to 59 has biased composition (pro residues); that stretch reads LVPPPPPPPG. Asymmetric dimethylarginine occurs at positions 85 and 87. A Phosphoserine; by PIM1 and PKB/AKT1 modification is found at S90. The interaction with PPIA/CYPA stretch occupies residues 649–1374; sequence HCKRFFEMVN…MLCTLWKAII (726 aa). Positions 687-945 constitute a Protein kinase domain; that stretch reads NGDRVVLGKG…ANDLLIDEFL (259 aa). ATP contacts are provided by residues 693 to 701 and K716; that span reads LGKGTYGIV. Residue Y725 is modified to Phosphotyrosine. D810 functions as the Proton acceptor in the catalytic mechanism. T820 is modified (phosphothreonine; by autocatalysis). T845 carries the phosphothreonine; by autocatalysis, MELK and MAP3K6 modification. T849 carries the phosphothreonine; by autocatalysis modification. Phosphoserine is present on S965. S973 carries the post-translational modification Phosphoserine; by autocatalysis. 2 positions are modified to phosphoserine: S1036 and S1040. The interval 1188–1215 is disordered; that stretch reads ASESDTADPEDLDVEDEHEELSSNQTVR. A compositionally biased stretch (acidic residues) spans 1192–1206; sequence DTADPEDLDVEDEHE. Residues 1252–1292 are a coiled coil; it reads LGRMKIETNRLLEELVRKERELQALLHQAIEEKDQEIRHLK.

Belongs to the protein kinase superfamily. STE Ser/Thr protein kinase family. MAP kinase kinase kinase subfamily. Homodimer when inactive. Binds both upstream activators and downstream substrates in multimolecular complexes. Part of a cytoplasmic complex made of HIPK1, DAB2IP and MAP3K5 in response to TNF. This complex formation promotes MAP3K5-JNK activation and subsequent apoptosis. Interacts with SOCS1 which recognizes phosphorylation of Tyr-725 and induces MAP3K5/ASK1 degradation in endothelial cells. Interacts with the 14-3-3 family proteins such as YWHAB, YWHAE, YWHAQ, YWHAH, YWHAZ and SFN. Interacts with ARRB2, BIRC2, DAB2IP, IGF1R, MAP3K6/ASK2, PIM1, PGAM5, SOCS1, STUB1, TRAF2 and TXN. Interacts with ERN1 in a TRAF2-dependent manner. Interacts with calcineurin subunit PPP3R1, PPP5C, PPM1L and TRAF6. Interacts (via N-terminus) with RAF1 and this interaction inhibits the proapoptotic function of MAP3K5. Interacts with DAB2IP (via N-terminus C2 domain); the interaction occurs in a TNF-alpha-dependent manner. Interacts with DUSP13A; may positively regulate apoptosis. Interacts with PPIA/CYPA. Interacts with PRMT1; the interaction results in MAP3K5 methylation by PRMT1 which inhibits MAP3K5 activation. Interacts with TRAF2; the interaction is inhibited by PRMT1. Interacts with TRIM48. Mg(2+) serves as cofactor. In terms of processing, ser-90 and Ser-1040 are inactivating phosphorylation sites, the former of which is phosphorylated by AKT1. Phosphorylated at Ser-973 which induces association of MAP3K5/ASK1 with the 14-3-3 family proteins and suppresses MAP3K5/ASK1 activity. Calcineurin (CN) dephosphorylates this site. Also dephosphorylated and activated by PGAM5. Phosphorylated at Thr-845 through autophosphorylation and by MAP3K6/ASK2 which leads to activation. Thr-845 is dephosphorylated by PPP5C. Phosphorylation at Ser-973 in response to oxidative stress is negatively regulated by PPIA/CYPA. Ubiquitinated. Tumor necrosis factor (TNF) induces TNFR2-dependent ubiquitination, leading to proteasomal degradation. Ubiquitinated by RC3H2 in a TRIM48-dependent manner. Post-translationally, methylation at Arg-85 and Arg-87 by PRMT1 promotes association of MAP3K5 with thioredoxin and negatively regulates MAP3K5 association with TRAF2, inhibiting MAP3K5 activation. Methylation is blocked by ubiquitination of PRMT1 by TRIM48. Expressed in various adult mouse tissues including heart, brain, lung, liver and kidney.

The protein resides in the cytoplasm. It localises to the endoplasmic reticulum. The enzyme catalyses L-seryl-[protein] + ATP = O-phospho-L-seryl-[protein] + ADP + H(+). It carries out the reaction L-threonyl-[protein] + ATP = O-phospho-L-threonyl-[protein] + ADP + H(+). With respect to regulation, activated by various stressors, including oxidative stress, endoplasmic reticulum stress, and calcium overload, as well as by receptor-mediated inflammatory signals, such as the tumor necrosis factor (TNF) and lipopolysaccharide (LPS). Homophilic association of MAP3K5/ASK1 through the C-terminal coiled-coil domains and the heteromeric complex formation of MAP3K5/ASK1 with the reduced form of thioredoxin (TXN), constitutes an inactive form of the kinase. Upon ROS-induced dissociation of TXN from MAP3K5/ASK1, TRAF2 and TRAF6 are reciprocally recruited to MAP3K5/ASK1 and form the active MAP3K5/ASK1 signalosome, in which TRAF2 and TRAF6 appear to facilitate the active configuration of MAP3K5/ASK1. MAP3K5/ASK1 activity is also regulated through several phosphorylation and dephosphorylation events. Thr-845 is an activating phosphorylation site that is autophosphorylated and phosphorylated by MAP3K6/ASK2 and dephosphorylated by PPP5C. Ser-90 and Ser-1040 are inactivating phosphorylation sites, the former of which is phosphorylated by AKT1. Phosphorylation of Ser-973 induces association of MAP3K5/ASK1 with the 14-3-3 family proteins, which suppresses MAP3K5/ASK1 activity. Calcium/calmodulin-activated protein phosphatase calcineurin (PPP3CA) has been shown to directly dephosphorylate this site. SOCS1 binds to ASK1 by recognizing phosphorylation of Tyr-725 and induces MAP3K5/ASK1 degradation in endothelial cells. Also dephosphorylated and activated by PGAM5. Contains an N-terminal autoinhibitory domain. Serine/threonine kinase which acts as an essential component of the MAP kinase signal transduction pathway. Plays an important role in the cascades of cellular responses evoked by changes in the environment. Mediates signaling for determination of cell fate such as differentiation and survival. Plays a crucial role in the apoptosis signal transduction pathway through mitochondria-dependent caspase activation. MAP3K5/ASK1 is required for the innate immune response, which is essential for host defense against a wide range of pathogens. Mediates signal transduction of various stressors like oxidative stress as well as by receptor-mediated inflammatory signals, such as the tumor necrosis factor (TNF) or lipopolysaccharide (LPS). Once activated, acts as an upstream activator of the MKK/JNK signal transduction cascade and the p38 MAPK signal transduction cascade through the phosphorylation and activation of several MAP kinase kinases like MAP2K4/SEK1, MAP2K3/MKK3, MAP2K6/MKK6 and MAP2K7/MKK7. These MAP2Ks in turn activate p38 MAPKs and c-jun N-terminal kinases (JNKs). Both p38 MAPK and JNKs control the transcription factors activator protein-1 (AP-1). The chain is Mitogen-activated protein kinase kinase kinase 5 (Map3k5) from Mus musculus (Mouse).